Here is a 321-residue protein sequence, read N- to C-terminus: Agamous-like MADS-box protein AGL80 (321 aa).

An MADS-box domain is found at 1 to 61 (MTRKKVKLAY…DTNPEVWPSN (61 aa)). A coiled-coil region spans residues 89-114 (FLKQRIAKATETLRRQRKDSRELEMT).

In terms of assembly, interacts with AGL61 and AGL62. Forms a heterodimer with AGL61. Interacts with MEE14/CBP1. As to expression, expressed in the central cell of the female gametophyte and in early endosperm. Also detected in ovaries, young siliques, roots, leaves, stems, young flowers and anthers.

It is found in the nucleus. Probable transcription factor. Controls central cell differentiation during female gametophyte development. Required for the expression of DEMETER and DD46, but not for the expression of FIS2. Probable transcription factor that may function in the maintenance of the proper function of the central cell in pollen tube attraction. This chain is Agamous-like MADS-box protein AGL80 (AGL80), found in Arabidopsis thaliana (Mouse-ear cress).